The sequence spans 445 residues: Dihydroorotate dehydrogenase (quinone), mitochondrial (445 aa).

Residues 1 to 16 constitute a mitochondrion transit peptide; it reads MNSGFPRILSKKLFTL. Residues 39–56 form a helical membrane-spanning segment; that stretch reads LLKYTVGIAIGSFAGFYF. Residues 124-128 and Ser148 each bind FMN; that span reads AGLDK. Lys128 serves as a coordination point for substrate. Substrate is bound at residue 173–177; that stretch reads NRYGF. 2 residues coordinate FMN: Asn221 and Asn251. Position 251-256 (251-256) interacts with substrate; sequence NVSSPN. Ser254 acts as the Nucleophile in catalysis. Positions 302 and 330 each coordinate FMN. 331–332 contacts substrate; it reads NT. FMN is bound by residues Gly356, Gly386, and 407–408; that span reads YT.

It belongs to the dihydroorotate dehydrogenase family. Type 2 subfamily. Requires FMN as cofactor.

It localises to the mitochondrion inner membrane. It catalyses the reaction (S)-dihydroorotate + a quinone = orotate + a quinol. It participates in pyrimidine metabolism; UMP biosynthesis via de novo pathway; orotate from (S)-dihydroorotate (quinone route): step 1/1. In terms of biological role, catalyzes the conversion of dihydroorotate to orotate with quinone as electron acceptor. This is Dihydroorotate dehydrogenase (quinone), mitochondrial (URA9) from Kluyveromyces lactis (strain ATCC 8585 / CBS 2359 / DSM 70799 / NBRC 1267 / NRRL Y-1140 / WM37) (Yeast).